The chain runs to 627 residues: Probable inactive receptor kinase At3g02880 (627 aa).

Residues 1 to 23 (MKYKRKLSLSVVFLFVFYLAAVT) form the signal peptide. 5 LRR repeats span residues 91–112 (QLKTLSLRFNSLSGPIPSDFSN), 115–137 (LLRYLYLQGNAFSGEIPSLLFTL), 139–161 (SIIRINLGENKFSGRIPDNVNSA), 163–184 (RLVTLYLERNQLSGPIPEITLP), and 185–206 (LQQFNVSSNQLNGSIPSSLSSW). Residues 222 to 246 (DTCEAESPNGGDAGGPNTPPEKKDS) form a disordered region. The helical transmembrane segment at 253 to 273 (AIVGIVIGCVVGLLLLLLILF) threads the bilayer. One can recognise a Protein kinase domain in the interval 345 to 620 (KASAEVLGKG…LIEEVSHSSG (276 aa)). Ser347 is modified (phosphoserine). ATP-binding positions include 351–359 (LGKGTVGSS) and Lys373. The helical transmembrane segment at 389–409 (LHVLGSMSHANLVTLIAYYFS) threads the bilayer. Position 424 is a phosphoserine (Ser424). A Phosphothreonine modification is found at Thr444. Position 519 is a phosphoserine (Ser519). Thr595 is modified (phosphothreonine). Residues Ser621 and Ser626 each carry the phosphoserine modification.

This sequence belongs to the protein kinase superfamily. Ser/Thr protein kinase family.

The protein localises to the membrane. The polypeptide is Probable inactive receptor kinase At3g02880 (Arabidopsis thaliana (Mouse-ear cress)).